A 443-amino-acid chain; its full sequence is Proline--tRNA ligase (443 aa).

The protein belongs to the class-II aminoacyl-tRNA synthetase family. ProS type 2 subfamily. As to quaternary structure, homodimer.

It is found in the cytoplasm. The catalysed reaction is tRNA(Pro) + L-proline + ATP = L-prolyl-tRNA(Pro) + AMP + diphosphate. In terms of biological role, catalyzes the attachment of proline to tRNA(Pro) in a two-step reaction: proline is first activated by ATP to form Pro-AMP and then transferred to the acceptor end of tRNA(Pro). The chain is Proline--tRNA ligase from Caulobacter vibrioides (strain ATCC 19089 / CIP 103742 / CB 15) (Caulobacter crescentus).